Reading from the N-terminus, the 490-residue chain is MSRMAEQQLYINGGYTSATSGRTFETINPATGEVLATVQAAGREDVDRAVESAQRGQKIWAAMTAMERSRILRRAVDLLRQRNDELARLETLDTGKPLSETAAVDIVTGADVLEYYAGLIPALEGSQIPLRDSSFVYTRREPLGVVAGIGAWNYPIQIALWKSAPALAAGNAMIFKPSEVTPLTALKLAEIYSEAGLPDGVFNVLPGIGAETGQYLTEHPGIAKISFTGGVASGKKVMANSAASSLKEVTMELGGKSPLIIADDADLDLAADIAMMANFYSSGQVCTNGTRVFVPAKQKAEFEHKILERVGRIRPGDLFADDTNFGPLVSFPHRDNVLRYIESGKREGARLLCGGEALKGDGFDNGAWVAPTVFTDCSDEMTIVREEIFGPVMSILSYTDEAEVIRRANATEYGLAAGVVTPNLNRAHRLIHQLEAGICWINSWGESPAEMPVGGYKHSGIGRENGVMTLQSYTQVKSIQVEMGKFQSIF.

The K(+) site is built by T26, I27, and D93. 150-152 (GAW) contacts NAD(+). K162 serves as the catalytic Charge relay system. 176-179 (KPSE) provides a ligand contact to NAD(+). V180 provides a ligand contact to K(+). Residue 230-233 (GVAS) participates in NAD(+) binding. K(+) is bound at residue L246. Catalysis depends on E252, which acts as the Proton acceptor. NAD(+)-binding residues include G254, C286, and E387. C286 (nucleophile) is an active-site residue. Residue C286 is modified to Cysteine sulfenic acid (-SOH). 2 residues coordinate K(+): K457 and G460. Residue E464 is the Charge relay system of the active site.

It belongs to the aldehyde dehydrogenase family. In terms of assembly, dimer of dimers. The cofactor is K(+).

The catalysed reaction is betaine aldehyde + NAD(+) + H2O = glycine betaine + NADH + 2 H(+). It functions in the pathway amine and polyamine biosynthesis; betaine biosynthesis via choline pathway; betaine from betaine aldehyde: step 1/1. Its function is as follows. Involved in the biosynthesis of the osmoprotectant glycine betaine. Catalyzes the irreversible oxidation of betaine aldehyde to the corresponding acid. The polypeptide is Betaine aldehyde dehydrogenase (Klebsiella pneumoniae (strain 342)).